The chain runs to 224 residues: Claudin-19 (224 aa).

The Cytoplasmic portion of the chain corresponds to 1 to 7 (MANSGLQ). The helical transmembrane segment at 8–28 (LLGYFLALGGWVGIIASTALP) threads the bilayer. The Extracellular portion of the chain corresponds to 29–81 (QWKQSSYAGDAIITAVGLYEGLWMSCASQSTGQVQCKLYDSLLALDGHIQSAR). Cysteines 54 and 64 form a disulfide. Residues 82–102 (ALMVVAVLLGFVAMVLSVVGM) form a helical membrane-spanning segment. The Cytoplasmic portion of the chain corresponds to 103-117 (KCTRVGDSNPTAKGR). The chain crosses the membrane as a helical span at residues 118–138 (VAISGGALFLLAGLCTLTAVS). Residues 139–160 (WYATLVTQEFFNPSTPVNARYE) lie on the Extracellular side of the membrane. Residues 161–181 (FGPALFVGWASAGLAILGGSF) form a helical membrane-spanning segment. Residues 182–224 (LCCTCPEPERANSIPQPYRSGPSTAAREPVVKLSTSVKGPLGV) are Cytoplasmic-facing.

Belongs to the claudin family. As to quaternary structure, can form homo- and heteropolymeric tight junction strands. Interacts with other claudins including CLDN3, CLDN10, CLDN16 and CLDN18 with highest affinity for CLDN16. Interacts (via PDZ-binding motif TRV) with TJP1 (via PDZ domain).

It localises to the cell junction. The protein localises to the tight junction. It is found in the cell membrane. The enzyme catalyses Mg(2+)(in) = Mg(2+)(out). It catalyses the reaction Ca(2+)(in) = Ca(2+)(out). It carries out the reaction Na(+)(in) = Na(+)(out). The catalysed reaction is K(+)(in) = K(+)(out). The enzyme catalyses Rb(+)(in) = Rb(+)(out). It catalyses the reaction Cs(+)(in) = Cs(+)(out). It carries out the reaction Li(+)(in) = Li(+)(out). Functionally, forms paracellular channels: coassembles with CLDN16 into tight junction strands with cation-selective channels through the strands, conveying epithelial permeability in a process known as paracellular tight junction permeability. Involved in the maintenance of ion gradients along the nephron. In the thick ascending limb (TAL) of Henle's loop, facilitates sodium paracellular permeability from the interstitial compartment to the lumen, contributing to the lumen-positive transepithelial potential that drives paracellular magnesium and calcium reabsorption. Forms paracellular barriers on its own. In the peripheral nervous system, represents a major constituent of the tight junctions in Schwann cells and contributes to electrical sealing. During retinal neurogenesis, may regulate the barrier properties of tight junctions in retinal pigment epithelium, required for proper retinal tissue differentiation and vision. The protein is Claudin-19 of Rattus norvegicus (Rat).